Here is a 123-residue protein sequence, read N- to C-terminus: ATP synthase epsilon chain (123 aa).

The protein belongs to the ATPase epsilon chain family. In terms of assembly, F-type ATPases have 2 components, CF(1) - the catalytic core - and CF(0) - the membrane proton channel. CF(1) has five subunits: alpha(3), beta(3), gamma(1), delta(1), epsilon(1). CF(0) has three main subunits: a, b and c.

It is found in the cell inner membrane. Produces ATP from ADP in the presence of a proton gradient across the membrane. This is ATP synthase epsilon chain from Helicobacter acinonychis (strain Sheeba).